The chain runs to 100 residues: UPF0251 protein VV2_0946 (100 aa).

The protein belongs to the UPF0251 family.

The protein is UPF0251 protein VV2_0946 of Vibrio vulnificus (strain CMCP6).